Consider the following 262-residue polypeptide: Abhydrolase domain-containing protein AKT2 (262 aa).

The short motif at 260–262 is the Peroxisomal targeting signal type 1 element; it reads SKL.

It belongs to the AB hydrolase superfamily. AKT2 hydrolase family.

The protein resides in the peroxisome. Its pathway is mycotoxin biosynthesis. Functionally, abhydrolase domain-containing protein; part of the gene clusters that mediate the biosynthesis of the host-selective toxins (HSTs) AK-toxins responsible for Japanese pear black spot disease by the Japanese pear pathotype. AK-toxins are esters of 9,10-epoxy 8-hydroxy 9-methyldecatrienoic acid (EDA). On cellular level, AK-toxins affect plasma membrane of susceptible cells and cause a sudden increase in loss of K(+) after a few minutes of toxin treatment. The acyl-CoA ligase AKT1, the hydrolase AKT2 and enoyl-CoA hydratase AKT3 are all involved in the biosynthesis of the AK-, AF- and ACT-toxin common 9,10-epoxy-8-hydroxy-9-methyl-decatrienoic acid (EDA) structural moiety. Part of the EDA biosynthesis occurs in the peroxisome since these 3 enzymes are localized in peroxisomes. The exact roles of the 3 enzymes, as well as of additional AK-toxin clusters enzymes, including AKT4, AKT6 and AKTS1, have still to be elucidated. The Cytochrome P450 monooxygenase AKT7 on the other side functions to limit production of EDA and AK-toxin, probably via the catalysis of a side reaction of EDA or its precursor. This Alternaria alternata (Alternaria rot fungus) protein is Abhydrolase domain-containing protein AKT2.